A 278-amino-acid chain; its full sequence is HTH-type transcriptional activator RhaS (278 aa).

The region spanning 174–272 (NLLLAWLEDH…NWSPRDIRQG (99 aa)) is the HTH araC/xylS-type domain. 2 consecutive DNA-binding regions (H-T-H motif) follow at residues 191–212 (DAVA…KQQT) and 239–262 (VTDI…RREF).

As to quaternary structure, binds DNA as a dimer.

It localises to the cytoplasm. Its function is as follows. Activates expression of the rhaBAD and rhaT operons. This Escherichia coli O157:H7 protein is HTH-type transcriptional activator RhaS.